The sequence spans 194 residues: Fe/S biogenesis protein NfuA (194 aa).

[4Fe-4S] cluster-binding residues include Cys151 and Cys154.

This sequence belongs to the NfuA family. Homodimer. [4Fe-4S] cluster serves as cofactor.

Involved in iron-sulfur cluster biogenesis. Binds a 4Fe-4S cluster, can transfer this cluster to apoproteins, and thereby intervenes in the maturation of Fe/S proteins. Could also act as a scaffold/chaperone for damaged Fe/S proteins. The polypeptide is Fe/S biogenesis protein NfuA (Aliivibrio fischeri (strain ATCC 700601 / ES114) (Vibrio fischeri)).